Consider the following 645-residue polypeptide: ATP-dependent zinc metalloprotease FtsH 1 (645 aa).

Topologically, residues 1 to 6 (MRSTQK) are cytoplasmic. Residues 7 to 27 (TLALWFFLIIMAVFLFQAYES) traverse the membrane as a helical segment. Topologically, residues 28 to 110 (KQQKAIADFN…NYERADNGGF (83 aa)) are periplasmic. The chain crosses the membrane as a helical span at residues 111–131 (FQSLLVNWLPLILIVAMFLFI). Residues 132-645 (MRQIQAGGGK…PVGNTGPVTI (514 aa)) are Cytoplasmic-facing. 203–210 (GSPGTGKT) lines the ATP pocket. Residue His-425 coordinates Zn(2+). The active site involves Glu-426. His-429 and Asp-501 together coordinate Zn(2+).

The protein in the central section; belongs to the AAA ATPase family. In the C-terminal section; belongs to the peptidase M41 family. Homohexamer. It depends on Zn(2+) as a cofactor.

Its subcellular location is the cell inner membrane. Acts as a processive, ATP-dependent zinc metallopeptidase for both cytoplasmic and membrane proteins. Plays a role in the quality control of integral membrane proteins. This Bdellovibrio bacteriovorus (strain ATCC 15356 / DSM 50701 / NCIMB 9529 / HD100) protein is ATP-dependent zinc metalloprotease FtsH 1.